The primary structure comprises 125 residues: Translation initiation factor 5A (125 aa).

At Lys35 the chain carries Hypusine.

Belongs to the eIF-5A family.

It is found in the cytoplasm. Its function is as follows. Functions by promoting the formation of the first peptide bond. This chain is Translation initiation factor 5A (eIF5A), found in Methanosphaerula palustris (strain ATCC BAA-1556 / DSM 19958 / E1-9c).